Here is a 272-residue protein sequence, read N- to C-terminus: R3H domain-containing protein 4 (272 aa).

A disordered region spans residues leucine 141–tyrosine 167. The span at threonine 155–proline 165 shows a compositional bias: basic and acidic residues. The region spanning methionine 191–histidine 254 is the R3H domain.

It localises to the nucleus. The protein is R3H domain-containing protein 4 (R3HDM4) of Bos taurus (Bovine).